Reading from the N-terminus, the 906-residue chain is Cadherin-2A (906 aa).

Residues 1–28 form the signal peptide; it reads MCRKEPFLLPTALCILAALVLHQGPVEA. Residues 29 to 160 constitute a propeptide that is removed on maturation; the sequence is LGGSRLCKTG…KHNGLQRQKR (132 aa). Cadherin domains are found at residues 161–268, 269–383, 384–498, 499–604, and 605–714; these read DWVI…RPEF, LHQI…PPEF, TAMT…NPYF, TPNP…DNAP, and YVYP…TTAP. Residues 161-724 are Extracellular-facing; that stretch reads DWVIPPINVP…IIGTGLGTGA (564 aa). Ca(2+) is bound by residues glutamate 171, aspartate 227, glutamate 229, aspartate 260, methionine 261, asparagine 262, aspartate 263, and asparagine 264. Residue asparagine 274 is glycosylated (N-linked (GlcNAc...) asparagine). 3 residues coordinate Ca(2+): aspartate 294, aspartate 296, and asparagine 302. A glycan (N-linked (GlcNAc...) asparagine) is linked at asparagine 326. Residue aspartate 354 participates in Ca(2+) binding. N-linked (GlcNAc...) asparagine glycosylation is found at asparagine 403, asparagine 573, asparagine 623, asparagine 652, and asparagine 693. A helical membrane pass occupies residues 725–746; sequence IIAILLCIIILLTLVLMFVVWM. Residues 747 to 906 lie on the Cytoplasmic side of the membrane; it reads KRRDKERQAK…LADMYGGSDD (160 aa). Disordered regions lie at residues 775–800 and 863–884; these read EEGG…EPDT and SGST…EQDY. Residues 776 to 785 are compositionally biased toward acidic residues; sequence EGGGEEDQDY. The span at 863–880 shows a compositional bias: low complexity; that stretch reads SGSTAGSLSSLNSSSSGG.

In terms of assembly, homodimer (via extracellular region). Can also form heterodimers with other cadherins (via extracellular region). Dimerization occurs in trans, i.e. with a cadherin chain from another cell.

The protein localises to the cell membrane. Its subcellular location is the sarcolemma. It is found in the cell junction. It localises to the cell surface. The protein resides in the desmosome. The protein localises to the adherens junction. Calcium-dependent cell adhesion protein; preferentially mediates homotypic cell-cell adhesion. Cadherins may thus contribute to the sorting of heterogeneous cell types, and thereby play an important role during embryonic development. Required for proper neurite branching. Required for pre- and postsynaptic organization. The protein is Cadherin-2A (cdh2-a) of Xenopus laevis (African clawed frog).